The sequence spans 326 residues: DNA-directed RNA polymerase subunit alpha (326 aa).

The tract at residues 1-231 (MQTALLKPKI…DQLSVFAALE (231 aa)) is alpha N-terminal domain (alpha-NTD). An alpha C-terminal domain (alpha-CTD) region spans residues 247–326 (IDPILLRPVD…ENWPPAGLEK (80 aa)).

The protein belongs to the RNA polymerase alpha chain family. Homodimer. The RNAP catalytic core consists of 2 alpha, 1 beta, 1 beta' and 1 omega subunit. When a sigma factor is associated with the core the holoenzyme is formed, which can initiate transcription.

It carries out the reaction RNA(n) + a ribonucleoside 5'-triphosphate = RNA(n+1) + diphosphate. Functionally, DNA-dependent RNA polymerase catalyzes the transcription of DNA into RNA using the four ribonucleoside triphosphates as substrates. This Cupriavidus necator (strain ATCC 17699 / DSM 428 / KCTC 22496 / NCIMB 10442 / H16 / Stanier 337) (Ralstonia eutropha) protein is DNA-directed RNA polymerase subunit alpha.